Here is a 62-residue protein sequence, read N- to C-terminus: Conotoxin Mi5.2 (62 aa).

The signal sequence occupies residues 1–19 (MRCVPVFIILLLLIPSASS). Residues 20–50 (VDVQPLTRDDVPLASFLDDARRTLRSPWMTR) constitute a propeptide that is removed on maturation.

It belongs to the conotoxin T superfamily. Post-translationally, contains 2 disulfide bonds that can be either 'C1-C3, C2-C4' or 'C1-C4, C2-C3', since these disulfide connectivities have been observed for conotoxins with cysteine framework V (for examples, see AC P0DQQ7 and AC P81755). As to expression, expressed by the venom duct.

Its subcellular location is the secreted. This is Conotoxin Mi5.2 from Conus miles (Soldier cone).